Reading from the N-terminus, the 404-residue chain is p-hydroxybenzoate hydroxylase (404 aa).

Residues glutamate 35, 45 to 50 (RIRAGI), and glutamine 105 each bind FAD. Residues tyrosine 203, 214 to 216 (SMR), and tyrosine 224 each bind substrate. Aspartate 288 is an FAD binding site. Proline 295 contacts substrate. Position 301 to 302 (301 to 302 (LN)) interacts with FAD.

Belongs to the aromatic-ring hydroxylase family. As to quaternary structure, homodimer. The cofactor is FAD.

It carries out the reaction 4-hydroxybenzoate + NADPH + O2 + H(+) = 3,4-dihydroxybenzoate + NADP(+) + H2O. It functions in the pathway aromatic compound metabolism; benzoate degradation via hydroxylation; 3,4-dihydroxybenzoate from benzoate: step 2/2. In terms of biological role, catalyzes the incorporation of an atom of dioxygen into p-hydroxybenzoate (p-OHB) to form 3,4-dihydroxybenzoate (3,4DOHB). The reaction occurs in two parts: reduction of the flavin adenine dinucleotide (FAD) in the enzyme by reduced nicotinamide adenine dinucleotide phosphate (NADPH) in response to binding p-hydroxybenzoate to the enzyme and oxidation of reduced FAD with oxygen to form a hydroperoxide, which then oxygenates p-hydroxybenzoate. The sequence is that of p-hydroxybenzoate hydroxylase (pobA) from Acinetobacter baylyi (strain ATCC 33305 / BD413 / ADP1).